The sequence spans 422 residues: Serine--tRNA ligase (422 aa).

The disordered stretch occupies residues 1-20 (MHDLKSIRDNPDGFDAGLKR). Position 229 to 231 (229 to 231 (TAE)) interacts with L-serine. ATP is bound at residue 260 to 262 (RSE). Residue E283 participates in L-serine binding. 347 to 350 (EISS) is a binding site for ATP. S383 contacts L-serine.

This sequence belongs to the class-II aminoacyl-tRNA synthetase family. Type-1 seryl-tRNA synthetase subfamily. Homodimer. The tRNA molecule binds across the dimer.

It is found in the cytoplasm. It catalyses the reaction tRNA(Ser) + L-serine + ATP = L-seryl-tRNA(Ser) + AMP + diphosphate + H(+). It carries out the reaction tRNA(Sec) + L-serine + ATP = L-seryl-tRNA(Sec) + AMP + diphosphate + H(+). The protein operates within aminoacyl-tRNA biosynthesis; selenocysteinyl-tRNA(Sec) biosynthesis; L-seryl-tRNA(Sec) from L-serine and tRNA(Sec): step 1/1. Functionally, catalyzes the attachment of serine to tRNA(Ser). Is also able to aminoacylate tRNA(Sec) with serine, to form the misacylated tRNA L-seryl-tRNA(Sec), which will be further converted into selenocysteinyl-tRNA(Sec). The polypeptide is Serine--tRNA ligase (Paramagnetospirillum magneticum (strain ATCC 700264 / AMB-1) (Magnetospirillum magneticum)).